The following is a 98-amino-acid chain: NADH-ubiquinone oxidoreductase chain 4L (98 aa).

The next 3 membrane-spanning stretches (helical) occupy residues Met1–Leu21, Ser29–Leu49, and Ile61–Val81.

The protein belongs to the complex I subunit 4L family. As to quaternary structure, core subunit of respiratory chain NADH dehydrogenase (Complex I) which is composed of 45 different subunits.

The protein localises to the mitochondrion inner membrane. It carries out the reaction a ubiquinone + NADH + 5 H(+)(in) = a ubiquinol + NAD(+) + 4 H(+)(out). Functionally, core subunit of the mitochondrial membrane respiratory chain NADH dehydrogenase (Complex I) which catalyzes electron transfer from NADH through the respiratory chain, using ubiquinone as an electron acceptor. Part of the enzyme membrane arm which is embedded in the lipid bilayer and involved in proton translocation. This chain is NADH-ubiquinone oxidoreductase chain 4L (MT-ND4L), found in Platyrrhinus helleri (Heller's broad-nosed bat).